Consider the following 1302-residue polypeptide: Regulator of telomere elongation helicase 1 (1302 aa).

The region spanning 7-297 (NGVTVDFPFQ…TKTAQQGEPH (291 aa)) is the Helicase ATP-binding domain. 42-49 (SHTGTGKT) provides a ligand contact to ATP. Residues C146, C164, C173, and C208 each contribute to the [4Fe-4S] cluster site. The short motif at 152-168 (KKQESNHIQIHLCRKKV) is the Nuclear localization signal element. The DEAH box signature appears at 251–254 (DEAH). Low complexity predominate over residues 758 to 767 (PAPAPRATAP). The disordered stretch occupies residues 758–819 (PAPAPRATAP…AAGDPESSLC (62 aa)). Residues 770–780 (REGEDAVREVK) show a composition bias toward basic and acidic residues. The Nuclear localization signal signature appears at 873-879 (PRGGRKK). Disordered regions lie at residues 981–1006 (RPEH…APDP), 1019–1058 (DPRE…GKQG), 1134–1153 (CTDL…PQEE), and 1160–1234 (VLTH…QAAG). The segment covering 1178-1187 (KTQSKISSLL) has biased composition (polar residues). The short motif at 1180-1187 (QSKISSLL) is the PIP-box element.

It belongs to the helicase family. RAD3/XPD subfamily. As to quaternary structure, interacts with TERF1. Interacts (via PIP-box) with PCNA; the interaction is direct and essential for suppressing telomere fragility. Interacts with MMS19; the interaction mediates the association of RTEL1 with the cytosolic iron-sulfur protein assembly (CIA) complex.

It localises to the nucleus. It catalyses the reaction ATP + H2O = ADP + phosphate + H(+). Its function is as follows. A probable ATP-dependent DNA helicase implicated in telomere-length regulation, DNA repair and the maintenance of genomic stability. Acts as an anti-recombinase to counteract toxic recombination and limit crossover during meiosis. Regulates meiotic recombination and crossover homeostasis by physically dissociating strand invasion events and thereby promotes noncrossover repair by meiotic synthesis dependent strand annealing (SDSA) as well as disassembly of D loop recombination intermediates. Also disassembles T loops and prevents telomere fragility by counteracting telomeric G4-DNA structures, which together ensure the dynamics and stability of the telomere. This chain is Regulator of telomere elongation helicase 1, found in Pongo abelii (Sumatran orangutan).